The following is a 975-amino-acid chain: P3N-PIPO polyprotein (975 aa).

A Peptidase S30 domain is found at 139-284 (LKGQHTIHYV…GRDMSTIREF (146 aa)). Active-site for P1 proteinase activity residues include His192, Asp201, and Ser232. The Involved in interaction with stylet and aphid transmission signature appears at 335–338 (RITC). Residues 593–595 (PTK) carry the Involved in virions binding and aphid transmission motif. In terms of domain architecture, Peptidase C6 spans 619–741 (MYIAKDGFCH…ESELKYYRVG (123 aa)). Active-site for helper component proteinase activity residues include Cys627 and His700.

Belongs to the potyviridae P3N-PIPO polyprotein family. In terms of assembly, interacts (via PIPO domain) with host PCaP1 protein; this interaction may help to anchor the movement complex to the plasma membrane from which the complex could move to the plasmodesmata. Potyviral RNA is expressed as two polyproteins which undergo post-translational proteolytic processing. Genome polyprotein is processed by NIa-pro, P1 and HC-pro proteinases resulting in the production of at least ten individual proteins. P3N-PIPO is cleaved by P1 and HC-pro proteinases resulting in the production of three individual proteins. The P1 proteinase and the HC-pro cleave only their respective C-termini autocatalytically.

It localises to the host cell junction. The protein resides in the host plasmodesma. The enzyme catalyses Hydrolyzes a Gly-|-Gly bond at its own C-terminus, commonly in the sequence -Tyr-Xaa-Val-Gly-|-Gly, in the processing of the potyviral polyprotein.. In terms of biological role, required for aphid transmission and also has proteolytic activity. Only cleaves a Gly-Gly dipeptide at its own C-terminus. Interacts with virions and aphid stylets. Acts as a suppressor of RNA-mediated gene silencing, also known as post-transcriptional gene silencing (PTGS), a mechanism of plant viral defense that limits the accumulation of viral RNAs. May have RNA-binding activity. Its function is as follows. Allows efficient cell to cell propagation, by bypassing the host cell wall barrier. Transports viral genome to neighboring plant cells directly through plasmosdesmata, without any budding. The polypeptide is P3N-PIPO polyprotein (Arachis hypogaea (Peanut)).